A 141-amino-acid chain; its full sequence is Large ribosomal subunit protein uL11 (141 aa).

Belongs to the universal ribosomal protein uL11 family. As to quaternary structure, part of the ribosomal stalk of the 50S ribosomal subunit. Interacts with L10 and the large rRNA to form the base of the stalk. L10 forms an elongated spine to which L12 dimers bind in a sequential fashion forming a multimeric L10(L12)X complex. Post-translationally, one or more lysine residues are methylated.

Forms part of the ribosomal stalk which helps the ribosome interact with GTP-bound translation factors. This is Large ribosomal subunit protein uL11 from Clostridium tetani (strain Massachusetts / E88).